We begin with the raw amino-acid sequence, 149 residues long: Large ribosomal subunit protein bL9 (149 aa).

The protein belongs to the bacterial ribosomal protein bL9 family.

In terms of biological role, binds to the 23S rRNA. In Xanthomonas axonopodis pv. citri (strain 306), this protein is Large ribosomal subunit protein bL9.